The chain runs to 284 residues: tRNA-splicing endonuclease (284 aa).

Residues tyrosine 222, histidine 229, and lysine 257 contribute to the active site.

It belongs to the tRNA-intron endonuclease family. Archaeal long subfamily. Homodimer.

The catalysed reaction is pretRNA = a 3'-half-tRNA molecule with a 5'-OH end + a 5'-half-tRNA molecule with a 2',3'-cyclic phosphate end + an intron with a 2',3'-cyclic phosphate and a 5'-hydroxyl terminus.. Functionally, endonuclease that removes tRNA introns. Cleaves pre-tRNA at the 5'- and 3'-splice sites to release the intron. The products are an intron and two tRNA half-molecules bearing 2',3' cyclic phosphate and 5'-OH termini. Recognizes a pseudosymmetric substrate in which 2 bulged loops of 3 bases are separated by a stem of 4 bp. The protein is tRNA-splicing endonuclease of Picrophilus torridus (strain ATCC 700027 / DSM 9790 / JCM 10055 / NBRC 100828 / KAW 2/3).